The sequence spans 290 residues: HTH-type transcriptional activator RhaR (290 aa).

Positions 179–277 constitute an HTH araC/xylS-type domain; sequence DLIMSALQQS…GMTPRDYRQR (99 aa). 2 DNA-binding regions (H-T-H motif) span residues 196 to 217 and 244 to 267; these read ADFC…RQQT and ISDI…TREA.

In terms of assembly, binds DNA as a dimer.

Its subcellular location is the cytoplasm. Activates expression of the rhaSR operon in response to L-rhamnose. This chain is HTH-type transcriptional activator RhaR, found in Yersinia pseudotuberculosis serotype O:1b (strain IP 31758).